A 753-amino-acid chain; its full sequence is Photosystem I P700 chlorophyll a apoprotein A1 (753 aa).

Helical transmembrane passes span 72–95 (IFSAHFGHLAIIFVWLSGAYFHGA), 158–181 (LYCTAIGGLVMAALMMFAGWFHYH), 197–221 (MNHHLAGLLGLGCLSWAGHQIHVSL), 293–311 (TAHHHLALAVLFIVAGHMY), 350–373 (WHAQLAINLAMLGSLSIIVAHHMY), 389–415 (LSLFTHHMWIGGFLIVGAGAHGAIFMV), 437–459 (AIISHLNWVCIFLGFHSFGLYVH), and 534–552 (FMVHHIHAFTIHVTALILL). 2 residues coordinate [4Fe-4S] cluster: Cys-576 and Cys-585. The next 2 helical transmembrane spans lie at 592 to 613 (HVFLGLFWMYNSLSIVIFHFSW) and 667 to 689 (LSAYGLLFLGAHFIWAFSLMFLF). His-678 contributes to the chlorophyll a' binding site. 2 residues coordinate chlorophyll a: Met-686 and Tyr-694. Trp-695 contacts phylloquinone. The helical transmembrane segment at 727–747 (AVGVAHYLLGGIVTTWAFFLA) threads the bilayer.

It belongs to the PsaA/PsaB family. The PsaA/B heterodimer binds the P700 chlorophyll special pair and subsequent electron acceptors. PSI consists of a core antenna complex that captures photons, and an electron transfer chain that converts photonic excitation into a charge separation. The cyanobacterial PSI reaction center is composed of one copy each of PsaA,B,C,D,E,F,I,J,K,L,M and X, and forms trimeric complexes. The cofactor is PSI electron transfer chain: 5 chlorophyll a, 1 chlorophyll a', 2 phylloquinones and 3 4Fe-4S clusters. PSI core antenna: 90 chlorophyll a, 22 carotenoids, 3 phospholipids and 1 galactolipid. P700 is a chlorophyll a/chlorophyll a' dimer, A0 is one or more chlorophyll a, A1 is one or both phylloquinones and FX is a shared 4Fe-4S iron-sulfur center..

The protein resides in the cellular thylakoid membrane. The catalysed reaction is reduced [plastocyanin] + hnu + oxidized [2Fe-2S]-[ferredoxin] = oxidized [plastocyanin] + reduced [2Fe-2S]-[ferredoxin]. Functionally, psaA and PsaB bind P700, the primary electron donor of photosystem I (PSI), as well as the electron acceptors A0, A1 and FX. PSI is a plastocyanin/cytochrome c6-ferredoxin oxidoreductase, converting photonic excitation into a charge separation, which transfers an electron from the donor P700 chlorophyll pair to the spectroscopically characterized acceptors A0, A1, FX, FA and FB in turn. Oxidized P700 is reduced on the lumenal side of the thylakoid membrane by plastocyanin or cytochrome c6. The polypeptide is Photosystem I P700 chlorophyll a apoprotein A1 (Trichodesmium erythraeum (strain IMS101)).